A 203-amino-acid polypeptide reads, in one-letter code: ATP-dependent Clp protease proteolytic subunit (203 aa).

The Nucleophile role is filled by Ser107. The active site involves His132.

The protein belongs to the peptidase S14 family. In terms of assembly, fourteen ClpP subunits assemble into 2 heptameric rings which stack back to back to give a disk-like structure with a central cavity, resembling the structure of eukaryotic proteasomes.

Its subcellular location is the cytoplasm. The catalysed reaction is Hydrolysis of proteins to small peptides in the presence of ATP and magnesium. alpha-casein is the usual test substrate. In the absence of ATP, only oligopeptides shorter than five residues are hydrolyzed (such as succinyl-Leu-Tyr-|-NHMec, and Leu-Tyr-Leu-|-Tyr-Trp, in which cleavage of the -Tyr-|-Leu- and -Tyr-|-Trp bonds also occurs).. In terms of biological role, cleaves peptides in various proteins in a process that requires ATP hydrolysis. Has a chymotrypsin-like activity. Plays a major role in the degradation of misfolded proteins. The polypeptide is ATP-dependent Clp protease proteolytic subunit (Shewanella pealeana (strain ATCC 700345 / ANG-SQ1)).